The sequence spans 248 residues: Oligo(A)/oligo(T)-binding protein (248 aa).

The DNA-binding element occupies methionine 1–arginine 36. 2 disordered regions span residues methionine 1–glutamine 127 and threonine 219–isoleucine 248. A run of 3 repeats spans residues glycine 8–glycine 12, glycine 14–glycine 18, and glycine 26–glycine 30. The 3 X 5 AA repeats of G-R-K-P-G stretch occupies residues glycine 8–glycine 30. A compositionally biased stretch (basic residues) spans glycine 12–lysine 21. Over residues glutamine 37–threonine 71 the composition is skewed to basic and acidic residues. Composition is skewed to low complexity over residues histidine 72–serine 100 and glutamine 111–glutamine 127.

Binds as a dimer or higher oligomer.

In terms of biological role, DNA-binding protein that recognizes oligo(A).oligo(T) tracts (A.T DNA). Can bind to any 11 bp sequence in which 10 bases conform to an uninterrupted oligo(A).oligo(T) tract. In Saccharomyces cerevisiae (strain ATCC 204508 / S288c) (Baker's yeast), this protein is Oligo(A)/oligo(T)-binding protein (DAT1).